Consider the following 148-residue polypeptide: Large ribosomal subunit protein bL9 (148 aa).

This sequence belongs to the bacterial ribosomal protein bL9 family.

Functionally, binds to the 23S rRNA. This Syntrophotalea carbinolica (strain DSM 2380 / NBRC 103641 / GraBd1) (Pelobacter carbinolicus) protein is Large ribosomal subunit protein bL9.